The following is a 290-amino-acid chain: tRNA pseudouridine synthase A (290 aa).

Residue D56 is the Nucleophile of the active site. Position 109 (Y109) interacts with substrate.

It belongs to the tRNA pseudouridine synthase TruA family.

It catalyses the reaction uridine(38/39/40) in tRNA = pseudouridine(38/39/40) in tRNA. Functionally, formation of pseudouridine at positions 38, 39 and 40 in the anticodon stem and loop of transfer RNAs. This is tRNA pseudouridine synthase A from Methanobrevibacter smithii (strain ATCC 35061 / DSM 861 / OCM 144 / PS).